An 825-amino-acid chain; its full sequence is NT-3 growth factor receptor (825 aa).

The first 31 residues, 1–31 (MDVSLCPAKCSFWRIFLLGSVWLDYVGSVLA), serve as a signal peptide directing secretion. 2 cysteine pairs are disulfide-bonded: Cys-32-Cys-38 and Cys-36-Cys-45. The Extracellular portion of the chain corresponds to 32–429 (CPANCVCSKT…TVTHKPEEDT (398 aa)). Residues Asn-68, Asn-72, and Asn-79 are each glycosylated (N-linked (GlcNAc...) asparagine). LRR repeat units follow at residues 104 to 125 (GLQK…AFAK) and 128 to 149 (HLRY…LFQT). 2 N-linked (GlcNAc...) asparagine glycosylation sites follow: Asn-133 and Asn-163. The LRRCT domain maps to 160–209 (NFFNCSCDIRWMQLWQEQGEAKLNSQSLYCISADGSQLPLFRMNISQCDL). 2 cysteine pairs are disulfide-bonded: Cys-164/Cys-189 and Cys-166/Cys-207. Residues Asn-203, Asn-218, Asn-232, Asn-259, Asn-267, Asn-272, and Asn-294 are each glycosylated (N-linked (GlcNAc...) asparagine). Ig-like C2-type domains follow at residues 210 to 300 (PEIS…VALT) and 309 to 382 (SLEE…NRQE). Cysteines 231 and 284 form a disulfide. Cysteines 320 and 362 form a disulfide. Asn-375 and Asn-388 each carry an N-linked (GlcNAc...) asparagine glycan. A helical transmembrane segment spans residues 430-453 (FGVSIAVGLAAFACVLLVVLFIMI). Residues 454–825 (NKYGRRSKFG…ATPIYLDILG (372 aa)) lie on the Cytoplasmic side of the membrane. Tyr-516 carries the phosphotyrosine; by autocatalysis modification. Positions 538–814 (IVLKRELGEG…EIYKILHALG (277 aa)) constitute a Protein kinase domain. ATP contacts are provided by residues 544 to 552 (LGEGAFGKV) and Lys-572. Asp-679 (proton acceptor) is an active-site residue. Residues Tyr-705, Tyr-709, Tyr-710, and Tyr-820 each carry the phosphotyrosine; by autocatalysis modification.

It belongs to the protein kinase superfamily. Tyr protein kinase family. Insulin receptor subfamily. As to quaternary structure, exists in a dynamic equilibrium between monomeric (low affinity) and dimeric (high affinity) structures. Binds SH2B2. Interacts with SQSTM1 and KIDINS220. Interacts with PTPRS. Interacts with MAPK8IP3/JIP3. Ligand-mediated auto-phosphorylation. Preferentially in the brain, low levels in the ovaries.

It is found in the membrane. It carries out the reaction L-tyrosyl-[protein] + ATP = O-phospho-L-tyrosyl-[protein] + ADP + H(+). Functionally, receptor tyrosine kinase involved in nervous system and probably heart development. Upon binding of its ligand NTF3/neurotrophin-3, NTRK3 autophosphorylates and activates different signaling pathways, including the phosphatidylinositol 3-kinase/AKT and the MAPK pathways, that control cell survival and differentiation. This is NT-3 growth factor receptor (NTRK3) from Sus scrofa (Pig).